We begin with the raw amino-acid sequence, 241 residues long: DNA repair protein RecO (241 aa).

Belongs to the RecO family.

Its function is as follows. Involved in DNA repair and RecF pathway recombination. The polypeptide is DNA repair protein RecO (Dinoroseobacter shibae (strain DSM 16493 / NCIMB 14021 / DFL 12)).